A 251-amino-acid chain; its full sequence is uncharacterized protein (251 aa).

The first 18 residues, 1-18, serve as a signal peptide directing secretion; it reads MRILIILSIILCSLFARA.

The protein belongs to the MlaA family.

This is an uncharacterized protein from Rickettsia felis (strain ATCC VR-1525 / URRWXCal2) (Rickettsia azadi).